We begin with the raw amino-acid sequence, 292 residues long: Elongation factor Ts (292 aa).

An involved in Mg(2+) ion dislocation from EF-Tu region spans residues 79 to 82 (TDFV).

Belongs to the EF-Ts family.

Its subcellular location is the cytoplasm. Functionally, associates with the EF-Tu.GDP complex and induces the exchange of GDP to GTP. It remains bound to the aminoacyl-tRNA.EF-Tu.GTP complex up to the GTP hydrolysis stage on the ribosome. The sequence is that of Elongation factor Ts from Metamycoplasma arthritidis (strain 158L3-1) (Mycoplasma arthritidis).